The primary structure comprises 242 residues: ATP-dependent dethiobiotin synthetase BioD (242 aa).

12–17 is an ATP binding site; the sequence is EVGKTV. Thr16 contacts Mg(2+). Residue Lys37 is part of the active site. Ser41 contacts substrate. ATP contacts are provided by residues Asp51 and 112–115; that span reads EGAG. Residues Asp51 and Glu112 each contribute to the Mg(2+) site.

Belongs to the dethiobiotin synthetase family. In terms of assembly, homodimer. The cofactor is Mg(2+).

Its subcellular location is the cytoplasm. It carries out the reaction (7R,8S)-7,8-diammoniononanoate + CO2 + ATP = (4R,5S)-dethiobiotin + ADP + phosphate + 3 H(+). Its pathway is cofactor biosynthesis; biotin biosynthesis; biotin from 7,8-diaminononanoate: step 1/2. Functionally, catalyzes a mechanistically unusual reaction, the ATP-dependent insertion of CO2 between the N7 and N8 nitrogen atoms of 7,8-diaminopelargonic acid (DAPA, also called 7,8-diammoniononanoate) to form a ureido ring. The chain is ATP-dependent dethiobiotin synthetase BioD from Bacillus anthracis (strain A0248).